The chain runs to 170 residues: Ribosome maturation factor RimM (170 aa).

Residues P98 to F170 form the PRC barrel domain.

The protein belongs to the RimM family. In terms of assembly, binds ribosomal protein uS19.

The protein resides in the cytoplasm. In terms of biological role, an accessory protein needed during the final step in the assembly of 30S ribosomal subunit, possibly for assembly of the head region. Essential for efficient processing of 16S rRNA. May be needed both before and after RbfA during the maturation of 16S rRNA. It has affinity for free ribosomal 30S subunits but not for 70S ribosomes. The chain is Ribosome maturation factor RimM from Xanthomonas campestris pv. campestris (strain 8004).